The chain runs to 712 residues: MVTVKSVFCGEELILETGLLAKQAHGSVTLRLGNTTILATVVAAKEPNLESDFFPLTVNYNEKYYAGGKIPGGFFKREAKPRDKEILISRIIDRPLRPLFPEGFRNEVQIIPTVLSVDTDMPTDALALIASSAALTISWIPFGGPVAAVRIGYKNGEYIINPKNSELSTSELDIIVAGSKDAILMIEGEAKEVSEEVFIGAIELAHKEMQKYIDMQNEMASLCGTQKIEQELFEFDADLVKMVTEYGRDKIESANYNPDKTKRNESMDNAFNEIEEYIKTKVEDEKLISQVKGICHSIEEEIVREAIVEKCMRPDGRALDEIRPITTMTNLIPRVHGSALFTRGQTQCLSIVTLGSEKDAQLMDDIYGKENKTFMLHYNFPPFSVGEVGRYGAPGRREIGHGNLAERSFNAVLPPKDKFPYTIRVVAEILESNGSSSMATICASTMSLLSAGVPLNASVAGIAMGLATYKDGYKILTDIQGVEDHLGDMDFKVAGTRKGITAFQLDIKLTGISAQILKEALEQAKKARYFILDKIDATIANAGEISDFAPKYKTMDVNPEKIRVLIGPGGKNIKAIIEETGSDVEIQDSGVVNIFAPDTPTLDKTIKLINSYVKDPEVGEVYDGIVKDIKDFGAFVEILPGVEGLCHISELAYKHVMNVEEVLKIGDEVKVKILDVKGGKYSLSRKALLEKPADYVEEEYNKKEKKHGKKRF.

Mg(2+)-binding residues include aspartate 484 and aspartate 490. The KH domain maps to 550-609; the sequence is PKYKTMDVNPEKIRVLIGPGGKNIKAIIEETGSDVEIQDSGVVNIFAPDTPTLDKTIKLI. Positions 619-686 constitute an S1 motif domain; the sequence is GEVYDGIVKD…KGGKYSLSRK (68 aa).

It belongs to the polyribonucleotide nucleotidyltransferase family. Requires Mg(2+) as cofactor.

The protein localises to the cytoplasm. It catalyses the reaction RNA(n+1) + phosphate = RNA(n) + a ribonucleoside 5'-diphosphate. Functionally, involved in mRNA degradation. Catalyzes the phosphorolysis of single-stranded polyribonucleotides processively in the 3'- to 5'-direction. This chain is Polyribonucleotide nucleotidyltransferase, found in Brachyspira hyodysenteriae (strain ATCC 49526 / WA1).